Consider the following 225-residue polypeptide: Cytidylate kinase (225 aa).

11–19 (GPAAAGKST) is an ATP binding site.

This sequence belongs to the cytidylate kinase family. Type 1 subfamily.

It localises to the cytoplasm. The enzyme catalyses CMP + ATP = CDP + ADP. The catalysed reaction is dCMP + ATP = dCDP + ADP. This is Cytidylate kinase from Bacillus anthracis (strain A0248).